The following is a 253-amino-acid chain: Imidazole glycerol phosphate synthase subunit HisF (253 aa).

Residues Asp11 and Asp130 contribute to the active site.

The protein belongs to the HisA/HisF family. In terms of assembly, heterodimer of HisH and HisF.

Its subcellular location is the cytoplasm. The catalysed reaction is 5-[(5-phospho-1-deoxy-D-ribulos-1-ylimino)methylamino]-1-(5-phospho-beta-D-ribosyl)imidazole-4-carboxamide + L-glutamine = D-erythro-1-(imidazol-4-yl)glycerol 3-phosphate + 5-amino-1-(5-phospho-beta-D-ribosyl)imidazole-4-carboxamide + L-glutamate + H(+). The protein operates within amino-acid biosynthesis; L-histidine biosynthesis; L-histidine from 5-phospho-alpha-D-ribose 1-diphosphate: step 5/9. Functionally, IGPS catalyzes the conversion of PRFAR and glutamine to IGP, AICAR and glutamate. The HisF subunit catalyzes the cyclization activity that produces IGP and AICAR from PRFAR using the ammonia provided by the HisH subunit. The protein is Imidazole glycerol phosphate synthase subunit HisF of Methylibium petroleiphilum (strain ATCC BAA-1232 / LMG 22953 / PM1).